The sequence spans 206 residues: Small ribosomal subunit protein uS4 (206 aa).

Residues asparagine 18–serine 46 are disordered. The 63-residue stretch at arginine 94–alanine 156 folds into the S4 RNA-binding domain.

The protein belongs to the universal ribosomal protein uS4 family. As to quaternary structure, part of the 30S ribosomal subunit. Contacts protein S5. The interaction surface between S4 and S5 is involved in control of translational fidelity.

Functionally, one of the primary rRNA binding proteins, it binds directly to 16S rRNA where it nucleates assembly of the body of the 30S subunit. With S5 and S12 plays an important role in translational accuracy. This Ruegeria sp. (strain TM1040) (Silicibacter sp.) protein is Small ribosomal subunit protein uS4.